An 82-amino-acid polypeptide reads, in one-letter code: Sec-independent protein translocase protein TatA (82 aa).

A helical transmembrane segment spans residues 1–21 (MGSFSIWHWLIVLLIVVMVFG). Residues 46-82 (GASTDDSATTSAPAGQVTNNSTAADKTTIDVEAKHKS) are disordered. Positions 49–70 (TDDSATTSAPAGQVTNNSTAAD) are enriched in polar residues. Residues 72–82 (TTIDVEAKHKS) show a composition bias toward basic and acidic residues.

Belongs to the TatA/E family. As to quaternary structure, the Tat system comprises two distinct complexes: a TatABC complex, containing multiple copies of TatA, TatB and TatC subunits, and a separate TatA complex, containing only TatA subunits. Substrates initially bind to the TatABC complex, which probably triggers association of the separate TatA complex to form the active translocon.

Its subcellular location is the cell inner membrane. In terms of biological role, part of the twin-arginine translocation (Tat) system that transports large folded proteins containing a characteristic twin-arginine motif in their signal peptide across membranes. TatA could form the protein-conducting channel of the Tat system. The polypeptide is Sec-independent protein translocase protein TatA (Acidovorax sp. (strain JS42)).